Consider the following 93-residue polypeptide: Defensin alpha 4 (93 aa).

The first 19 residues, 1–19, serve as a signal peptide directing secretion; sequence MRTLTLLITLLLLALHTQA. Positions 20–62 are excised as a propeptide; the sequence is ESPQERAKAAPDQDMVMEDQDIFISFGGYKGTVLQDAVVKAGQ. 3 disulfides stabilise this stretch: Cys-64–Cys-92, Cys-66–Cys-81, and Cys-71–Cys-91.

This sequence belongs to the alpha-defensin family. As to expression, expressed in neutrophils (at protein level). Highest expression in bone marrow and to a much lesser extent in small intestine.

It is found in the secreted. Functionally, host-defense peptide that has antimicrobial activity against Gram-positive and Gram-negative bacteria and fungi (in vitro). Exhibits activity against E.coli, A.calcoaceticus, S,aureus and C.albicans. This is Defensin alpha 4 from Rattus norvegicus (Rat).